The primary structure comprises 440 residues: Trigger factor (440 aa).

The 86-residue stretch at 163–248 (GDTVVIDFKG…VHEVKTKELP (86 aa)) folds into the PPIase FKBP-type domain.

It belongs to the FKBP-type PPIase family. Tig subfamily.

The protein localises to the cytoplasm. The enzyme catalyses [protein]-peptidylproline (omega=180) = [protein]-peptidylproline (omega=0). In terms of biological role, involved in protein export. Acts as a chaperone by maintaining the newly synthesized protein in an open conformation. Functions as a peptidyl-prolyl cis-trans isomerase. This is Trigger factor from Lactiplantibacillus plantarum (strain ATCC BAA-793 / NCIMB 8826 / WCFS1) (Lactobacillus plantarum).